A 351-amino-acid polypeptide reads, in one-letter code: Histidine protein kinase SaeS (351 aa).

Helical transmembrane passes span 9 to 29 (IIIG…IAYI) and 40 to 60 (TLTL…SIFI). In terms of domain architecture, HAMP spans 61 to 114 (NPLIQKIKQFNIKTKQFANGNYASNDKTFNSPKEIYELNQSFNKMASEITQQMN). The Histidine kinase domain occupies 129-348 (NLAHDLKTPL…TMTVTLHKLD (220 aa)). H132 bears the Phosphohistidine; by autocatalysis mark.

Autophosphorylated.

It is found in the cell membrane. It catalyses the reaction ATP + protein L-histidine = ADP + protein N-phospho-L-histidine.. In terms of biological role, member of the two-component regulatory system SaeR/SaeS involved in the regulation of staphylococcal virulence factors in a strain-dependent fashion. Probably functions as a membrane-associated protein kinase that upon sensing the appropriate signal, autophosphorylates and in turn activates the cytosolic response regulator SaeR. This Staphylococcus aureus (strain bovine RF122 / ET3-1) protein is Histidine protein kinase SaeS (saeS).